We begin with the raw amino-acid sequence, 197 residues long: Class A basic helix-loop-helix protein 15 (197 aa).

A compositionally biased stretch (basic residues) spans 1–12; sequence MKTKNRPPRRRT. Disordered stretches follow at residues 1–82 and 178–197; these read MKTK…ERER and QPQG…REGS. Phosphothreonine occurs at positions 12 and 25. The span at 65–82 shows a compositional bias: basic and acidic residues; sequence GRRENSVQRRLESNERER. The 53-residue stretch at 72–124 folds into the bHLH domain; it reads QRRLESNERERQRMHKLNNAFQALREVIPHVRADKKLSKIETLTLAKNYIKSL.

As to quaternary structure, forms homodimers or heterodimers with TCF3 gene products E12 and E47. These dimers bind to the E-box site, however, heterodimer with MYOD1 does not bind target DNA. Expressed in pancreatic tissue only in acinar cells. There is a complete absence of expression in intra- or interlobular pancreatic ducts and in all islet cells.

The protein localises to the nucleus. In terms of biological role, plays a role in controlling the transcriptional activity of MyoD, ensuring that expanding myoblast populations remain undifferentiated. Repression may occur through muscle-specific E-box occupancy by homodimers. May also negatively regulate bHLH-mediated transcription through an N-terminal repressor domain. Serves as a key regulator of acinar cell function, stability, and identity. Also required for normal organelle localization in exocrine cells and for mitochondrial calcium ion transport. May function as a unique regulator of gene expression in several different embryonic and postnatal cell lineages. Binds to the E-box consensus sequence 5'-CANNTG-3'. This Mus musculus (Mouse) protein is Class A basic helix-loop-helix protein 15 (Bhlha15).